A 375-amino-acid chain; its full sequence is Flagellin (375 aa).

Belongs to the bacterial flagellin family.

The protein resides in the secreted. It localises to the bacterial flagellum. Functionally, flagellin is the subunit protein which polymerizes to form the filaments of bacterial flagella. Flagella are an important component in the invasiveness of B.bacilliformis. This chain is Flagellin, found in Bartonella bacilliformis.